The sequence spans 61 residues: Small ribosomal subunit protein uS14 (61 aa).

Cys24, Cys27, Cys40, and Cys43 together coordinate Zn(2+).

Belongs to the universal ribosomal protein uS14 family. Zinc-binding uS14 subfamily. In terms of assembly, part of the 30S ribosomal subunit. Contacts proteins S3 and S10. Requires Zn(2+) as cofactor.

In terms of biological role, binds 16S rRNA, required for the assembly of 30S particles and may also be responsible for determining the conformation of the 16S rRNA at the A site. In Kosmotoga olearia (strain ATCC BAA-1733 / DSM 21960 / TBF 19.5.1), this protein is Small ribosomal subunit protein uS14.